A 133-amino-acid polypeptide reads, in one-letter code: Small ribosomal subunit protein uS8 (133 aa).

Belongs to the universal ribosomal protein uS8 family. As to quaternary structure, part of the 30S ribosomal subunit. Contacts proteins S5 and S12.

One of the primary rRNA binding proteins, it binds directly to 16S rRNA central domain where it helps coordinate assembly of the platform of the 30S subunit. The sequence is that of Small ribosomal subunit protein uS8 from Synechococcus sp. (strain RCC307).